The sequence spans 87 residues: Small ribosomal subunit protein bS20 (87 aa).

The protein belongs to the bacterial ribosomal protein bS20 family.

In terms of biological role, binds directly to 16S ribosomal RNA. This Shigella flexneri serotype 5b (strain 8401) protein is Small ribosomal subunit protein bS20.